The following is a 361-amino-acid chain: MNLIYNFSAGPAMIPRDVLNQAKKELHNWKNLGSSIMEISHRSEEFIQMALEAEKDLRDLLKIPDSFKVLFCQGGARGQFSAIPMNLLNNLQTADYINSGYWSNSAFMEAKKYCTPRSIFIRETNGVKESLLPMHKWNINENSAYIHYCPNETIDGLSIYEEPVFENKIVVGDFSSFILSRSINIKNYDLIYAGAQKNIGPAGITIIIIRKNIIGYSSKMTPSILDYKKISDHHSMFNTPPTFAWYLSGLVFKWLKKQGGLKAIEKLNKKKSDLLYKKIDNSDFYINKINSKHRSQMNVVFHLVNPKLNYIFLKEASKTGLNYLRGHSIVGGMRASLYNAMPLEGVESLVKFMSYFEKRYG.

R42 provides a ligand contact to L-glutamate. Pyridoxal 5'-phosphate contacts are provided by residues 76–77 (AR), W102, T153, D173, and Q196. Position 197 is an N6-(pyridoxal phosphate)lysine (K197). 238–239 (NT) is a binding site for pyridoxal 5'-phosphate.

This sequence belongs to the class-V pyridoxal-phosphate-dependent aminotransferase family. SerC subfamily. Homodimer. Pyridoxal 5'-phosphate serves as cofactor.

The protein resides in the cytoplasm. It catalyses the reaction O-phospho-L-serine + 2-oxoglutarate = 3-phosphooxypyruvate + L-glutamate. It carries out the reaction 4-(phosphooxy)-L-threonine + 2-oxoglutarate = (R)-3-hydroxy-2-oxo-4-phosphooxybutanoate + L-glutamate. Its pathway is amino-acid biosynthesis; L-serine biosynthesis; L-serine from 3-phospho-D-glycerate: step 2/3. It functions in the pathway cofactor biosynthesis; pyridoxine 5'-phosphate biosynthesis; pyridoxine 5'-phosphate from D-erythrose 4-phosphate: step 3/5. In terms of biological role, catalyzes the reversible conversion of 3-phosphohydroxypyruvate to phosphoserine and of 3-hydroxy-2-oxo-4-phosphonooxybutanoate to phosphohydroxythreonine. This is Phosphoserine aminotransferase from Buchnera aphidicola subsp. Acyrthosiphon pisum (strain 5A).